The following is a 146-amino-acid chain: Putative pre-16S rRNA nuclease (146 aa).

It belongs to the YqgF nuclease family.

Its subcellular location is the cytoplasm. Its function is as follows. Could be a nuclease involved in processing of the 5'-end of pre-16S rRNA. The polypeptide is Putative pre-16S rRNA nuclease (Burkholderia thailandensis (strain ATCC 700388 / DSM 13276 / CCUG 48851 / CIP 106301 / E264)).